Consider the following 429-residue polypeptide: UDP-N-acetylglucosamine 1-carboxyvinyltransferase (429 aa).

22–23 is a binding site for phosphoenolpyruvate; it reads KN. Residue R102 coordinates UDP-N-acetyl-alpha-D-glucosamine. Catalysis depends on C126, which acts as the Proton donor. At C126 the chain carries 2-(S-cysteinyl)pyruvic acid O-phosphothioketal. UDP-N-acetyl-alpha-D-glucosamine is bound by residues 131 to 135, D316, and I338; that span reads RPVDL.

Belongs to the EPSP synthase family. MurA subfamily.

It localises to the cytoplasm. The catalysed reaction is phosphoenolpyruvate + UDP-N-acetyl-alpha-D-glucosamine = UDP-N-acetyl-3-O-(1-carboxyvinyl)-alpha-D-glucosamine + phosphate. Its pathway is cell wall biogenesis; peptidoglycan biosynthesis. Functionally, cell wall formation. Adds enolpyruvyl to UDP-N-acetylglucosamine. The protein is UDP-N-acetylglucosamine 1-carboxyvinyltransferase of Afipia carboxidovorans (strain ATCC 49405 / DSM 1227 / KCTC 32145 / OM5) (Oligotropha carboxidovorans).